Consider the following 177-residue polypeptide: Large ribosomal subunit protein uL6 (177 aa).

It belongs to the universal ribosomal protein uL6 family. Part of the 50S ribosomal subunit.

This protein binds to the 23S rRNA, and is important in its secondary structure. It is located near the subunit interface in the base of the L7/L12 stalk, and near the tRNA binding site of the peptidyltransferase center. The chain is Large ribosomal subunit protein uL6 from Aeromonas hydrophila subsp. hydrophila (strain ATCC 7966 / DSM 30187 / BCRC 13018 / CCUG 14551 / JCM 1027 / KCTC 2358 / NCIMB 9240 / NCTC 8049).